The primary structure comprises 113 residues: U11-theraphotoxin-Hhn1a (113 aa).

The first 21 residues, 1-21 (MNTVRVTFLLVFVLAVSLGQA), serve as a signal peptide directing secretion. The propeptide occupies 22–74 (DKDENRMEMQEKTEQGKSYLDFAENLLLQKLEELEAKPLEEDSEESRNSRQKR). A compositionally biased stretch (basic and acidic residues) spans 57-69 (AKPLEEDSEESRN). The tract at residues 57–83 (AKPLEEDSEESRNSRQKRCIGEGVPCD) is disordered. 3 disulfide bridges follow: Cys-75–Cys-90, Cys-82–Cys-95, and Cys-89–Cys-110.

This sequence belongs to the neurotoxin 14 (magi-1) family. 01 (HNTX-16) subfamily. As to expression, expressed by the venom gland.

The protein localises to the secreted. Functionally, probable ion channel inhibitor. This Cyriopagopus hainanus (Chinese bird spider) protein is U11-theraphotoxin-Hhn1a.